Here is a 142-residue protein sequence, read N- to C-terminus: Hemoglobin subunit alpha (142 aa).

One can recognise a Globin domain in the interval 2 to 142 (KLSAEDKHNV…VGHVLTSKYR (141 aa)). H59 serves as a coordination point for O2. H88 is a binding site for heme b.

The protein belongs to the globin family. Heterotetramer of two alpha chains and two beta chains. Red blood cells.

Its function is as follows. Involved in oxygen transport from the lung to the various peripheral tissues. The sequence is that of Hemoglobin subunit alpha (HBA) from Taricha granulosa (Roughskin newt).